We begin with the raw amino-acid sequence, 40 residues long: Serine proteinase-like BMK-CBP (40 aa).

The Peptidase S1 domain occupies 1–40 (IFGGTFAKNGEYPWMVVIDLPEFACGGVLISKKFVLTAAH). The Charge relay system role is filled by histidine 40.

Belongs to the peptidase S1 family. In terms of tissue distribution, expressed by the venom gland.

Its subcellular location is the secreted. Binds in a dose-dependent manner to the breast cancer cell line MCF-7. In Olivierus martensii (Manchurian scorpion), this protein is Serine proteinase-like BMK-CBP.